The chain runs to 474 residues: MAQDTQTNTAVQGKIVQCIGAVVDVEFPRDQMPKIYDALKLEGSALTLEVQQQLGDGIVRTIALGSSDGLRRGLMVSNTANPIMVPVGTATLGRIMDVLGTPIDERGPVSTEKYASIHRKAPTYDELSPSQELLETGIKVIDLVCPFAKGGKVGLFGGAGVGKTVNMMELINNIAKAHSGLSVFAGVGERTREGNDFYHEMADSGVVNLENLGESKVAMVYGQMNEPPGNRLRVALTGLTIAESFRDEGKDVLFFVDNIYRFTLAGTEVSALLGRMPSAVGYQPTLAEEMGRLQERITSTKVGSITSIQAVYVPADDLTDPSPATTFAHLDSTVVLSRDIASLGIYPAVDPLDSTSRQLDPNVVGQDHYETARAVQGTLQRYKELRDIIAILGMDELAPEDKLTVARARKIQRFLSQPFHVAEVFTGSPGKYVSLAETIRGFKMIVAGECDHLPEQAFYMVGTIDEAFEKAKKI.

Glycine 157–threonine 164 provides a ligand contact to ATP.

The protein belongs to the ATPase alpha/beta chains family. As to quaternary structure, F-type ATPases have 2 components, CF(1) - the catalytic core - and CF(0) - the membrane proton channel. CF(1) has five subunits: alpha(3), beta(3), gamma(1), delta(1), epsilon(1). CF(0) has three main subunits: a(1), b(2) and c(9-12). The alpha and beta chains form an alternating ring which encloses part of the gamma chain. CF(1) is attached to CF(0) by a central stalk formed by the gamma and epsilon chains, while a peripheral stalk is formed by the delta and b chains.

The protein localises to the cell inner membrane. It carries out the reaction ATP + H2O + 4 H(+)(in) = ADP + phosphate + 5 H(+)(out). In terms of biological role, produces ATP from ADP in the presence of a proton gradient across the membrane. The catalytic sites are hosted primarily by the beta subunits. This Albidiferax ferrireducens (strain ATCC BAA-621 / DSM 15236 / T118) (Rhodoferax ferrireducens) protein is ATP synthase subunit beta 1.